The sequence spans 429 residues: 3-phosphoshikimate 1-carboxyvinyltransferase (429 aa).

Positions 20, 21, and 25 each coordinate 3-phosphoshikimate. Residue K20 participates in phosphoenolpyruvate binding. Phosphoenolpyruvate contacts are provided by G89 and R118. Residues S164, S165, Q166, S192, D311, and K338 each contribute to the 3-phosphoshikimate site. Position 166 (Q166) interacts with phosphoenolpyruvate. Residue D311 is the Proton acceptor of the active site. Phosphoenolpyruvate-binding residues include R342 and R384.

The protein belongs to the EPSP synthase family. As to quaternary structure, monomer.

The protein localises to the cytoplasm. The enzyme catalyses 3-phosphoshikimate + phosphoenolpyruvate = 5-O-(1-carboxyvinyl)-3-phosphoshikimate + phosphate. The protein operates within metabolic intermediate biosynthesis; chorismate biosynthesis. Catalyzes the transfer of the enolpyruvyl moiety of phosphoenolpyruvate (PEP) to the 5-hydroxyl of shikimate-3-phosphate (S3P) to produce enolpyruvyl shikimate-3-phosphate and inorganic phosphate. This Methanococcus maripaludis (strain DSM 14266 / JCM 13030 / NBRC 101832 / S2 / LL) protein is 3-phosphoshikimate 1-carboxyvinyltransferase.